Reading from the N-terminus, the 57-residue chain is Light-harvesting protein B-808/866 alpha chain (57 aa).

The residue at position 1 (Met1) is an N-formylmethionine. Topologically, residues 1–10 (MQPRSPVRTN) are cytoplasmic. Residues 11–30 (IVIFTILGFVVALLIHFIVL) form a helical membrane-spanning segment. Residue His26 coordinates a bacteriochlorophyll. Residues 31-57 (SSPEYNWLSNAEGGALLLSAARALFGI) lie on the Periplasmic side of the membrane.

The protein belongs to the antenna complex alpha subunit family. As to quaternary structure, the core complex is formed by different alpha and beta chains, binding bacteriochlorophyll molecules, and arranged most probably in tetrameric structures disposed around the reaction center. The non-pigmented gamma chains may constitute additional components.

The protein resides in the cell membrane. Antenna complexes are light-harvesting systems, which transfer the excitation energy to the reaction centers. The chain is Light-harvesting protein B-808/866 alpha chain (puf2A) from Chloroflexus aurantiacus (strain ATCC 29366 / DSM 635 / J-10-fl).